The sequence spans 332 residues: Anthranilate phosphoribosyltransferase (332 aa).

5-phospho-alpha-D-ribose 1-diphosphate contacts are provided by residues G78, 81–82, T86, 88–91, 106–114, and A118; these read GD, NVST, and KHGNRAASS. Position 78 (G78) interacts with anthranilate. Residue S90 coordinates Mg(2+). Position 109 (N109) interacts with anthranilate. Position 164 (R164) interacts with anthranilate. The Mg(2+) site is built by D223 and E224.

It belongs to the anthranilate phosphoribosyltransferase family. Homodimer. The cofactor is Mg(2+).

The catalysed reaction is N-(5-phospho-beta-D-ribosyl)anthranilate + diphosphate = 5-phospho-alpha-D-ribose 1-diphosphate + anthranilate. It participates in amino-acid biosynthesis; L-tryptophan biosynthesis; L-tryptophan from chorismate: step 2/5. Its function is as follows. Catalyzes the transfer of the phosphoribosyl group of 5-phosphorylribose-1-pyrophosphate (PRPP) to anthranilate to yield N-(5'-phosphoribosyl)-anthranilate (PRA). In Sphingopyxis alaskensis (strain DSM 13593 / LMG 18877 / RB2256) (Sphingomonas alaskensis), this protein is Anthranilate phosphoribosyltransferase.